A 411-amino-acid polypeptide reads, in one-letter code: LL-diaminopimelate aminotransferase (411 aa).

Tyrosine 15 and glycine 42 together coordinate substrate. Residues tyrosine 72, 108 to 109, tyrosine 132, asparagine 187, tyrosine 218, and 246 to 248 contribute to the pyridoxal 5'-phosphate site; these read SK and SFS. Substrate contacts are provided by lysine 109, tyrosine 132, and asparagine 187. Position 249 is an N6-(pyridoxal phosphate)lysine (lysine 249). Positions 257 and 292 each coordinate pyridoxal 5'-phosphate. Asparagine 292 and arginine 388 together coordinate substrate.

The protein belongs to the class-I pyridoxal-phosphate-dependent aminotransferase family. LL-diaminopimelate aminotransferase subfamily. As to quaternary structure, homodimer. Pyridoxal 5'-phosphate is required as a cofactor.

It catalyses the reaction (2S,6S)-2,6-diaminopimelate + 2-oxoglutarate = (S)-2,3,4,5-tetrahydrodipicolinate + L-glutamate + H2O + H(+). It functions in the pathway amino-acid biosynthesis; L-lysine biosynthesis via DAP pathway; LL-2,6-diaminopimelate from (S)-tetrahydrodipicolinate (aminotransferase route): step 1/1. In terms of biological role, involved in the synthesis of meso-diaminopimelate (m-DAP or DL-DAP), required for both lysine and peptidoglycan biosynthesis. Catalyzes the direct conversion of tetrahydrodipicolinate to LL-diaminopimelate. This Synechococcus sp. (strain JA-3-3Ab) (Cyanobacteria bacterium Yellowstone A-Prime) protein is LL-diaminopimelate aminotransferase.